The sequence spans 86 residues: MGKIFDQEKRLEGTWKNSKWGNQGIIAPVDGDLKMIDLELEKKMTKLEHENKLMKNALYELSRMENNDYATWVIKVLFGGAPHGAK.

Residues 38-67 (LELEKKMTKLEHENKLMKNALYELSRMENN) are a coiled coil.

It belongs to the phi29likevirus DNA replication protein 1 family. In terms of assembly, homomultimer. Self-associates into large complexes forming long filamentous structures. Interacts (via N-terminus) with the primer terminal protein. Interacts with host FtsZ protein.

The protein resides in the host membrane. Functionally, protein that assembles into highly ordered structures and provides a specific site for viral DNA replication. Probably anchors the viral DNA replisome to the host membrane. The polypeptide is DNA replication protein 1 (1) (Bacillus subtilis (Bacteriophage phi-29)).